We begin with the raw amino-acid sequence, 340 residues long: Gigasin-2 (340 aa).

The N-terminal stretch at 1 to 21 (MNKMSPLYVLALCCLATTVFA) is a signal peptide. EGF-like domains lie at 22-57 (KYDCTNNGGYGCKYGGTCHFYGFCICPKGFQGEDCG) and 65-97 (TAANCTAECKNGGTCYESDRCYCPHGFIGDMCE). 6 disulfides stabilise this stretch: C25-C39, C33-C45, C47-C56, C69-C79, C73-C85, and C87-C96.

In terms of tissue distribution, component of the organic matrix of calcified shell layers.

The sequence is that of Gigasin-2 from Magallana gigas (Pacific oyster).